We begin with the raw amino-acid sequence, 339 residues long: RNA polymerase principal sigma factor HrdC (339 aa).

Positions 1–10 are enriched in low complexity; the sequence is MAPTARTPTA. Disordered stretches follow at residues 1–37 and 71–101; these read MAPT…EEPD and REEL…DGQE. Positions 91–101 are enriched in basic and acidic residues; that stretch reads TLEETVHDGQE. The Polymerase core binding motif lies at 130-143; that stretch reads DVIQEGNLGLIRAV. The segment at residues 300–319 is a DNA-binding region (H-T-H motif); it reads LQQVAQHVGLTRERVRQLEK.

The protein belongs to the sigma-70 factor family. In terms of assembly, interacts transiently with the RNA polymerase catalytic core.

Sigma factors are initiation factors that promote the attachment of RNA polymerase to specific initiation sites and are then released. The polypeptide is RNA polymerase principal sigma factor HrdC (hrdC) (Streptomyces coelicolor (strain ATCC BAA-471 / A3(2) / M145)).